Here is an 818-residue protein sequence, read N- to C-terminus: MSGSQNDDRRQFLLERLLDAVKQCQIRFGGRKEIASDSDSRVTCLCAQFEAVLQHGMKRSRGLALTAAAIKQAAGFTSKTETEPVFWVYVKEVLNKHELQRFYSLHHITSDAGRGRAWLRCALNEHSLERYLHMLLADRARLSTFYEDWSFVMDEERSSMLPTMAAGLNSILFAINIDNKDLNGQSKFAPTVSDLLKESTQNVTSLLKESTQGMSSLLREITASSAVSILIKPEQETDPLPVISKNVHVDTRCKRERRRRKKVTNIVSFDDDEEEQGTGDTLKKMPGTAESSEENSDRSSVNIMAAFEGTFGPNSNGSQSSSSWKIDSASLNGELGYQKLDVKSIDDDVDENEEDAYRSPLGRGHTGHAESPDRTLDGNACLAQVHGWAPLQVLHGDADADTDVLFPVSGVGSYGAADAPVGSLENGTGTENHIIPEPGLRYREASSPGQGSPLSSLLPSASVPESMTVHELRQAIVAMMNRKDELEEENGSLRNLLDGEMEHSAALRQEVDALRRKVTEQQERHATKVQALARENEVLKVQLKKYVGAVQMLKREGQTAEAVPSLWNVDAEVTVPEQKPGEVAEELASSYERKLIEVAEMHGELIEFNERLHRALVAKEALVSQMRQELIDLRGPVPGDLSQTSEDQSLSDFEISNRALINVWIPSVFLRGKAANAFHVYQVYIRIKDDEWNVYRRYTEFRALHHQLQSAFPQVRAYSFPPKKAIGNKDAKFVEERRKQLQSYLRSVMNKVIQMVPEFAANPKKETLVQLVPFFVDITPPGEPLNKSSRPKAVSRFPKLSRGHPREVRNVEPQSGDL.

The RUN domain occupies 36 to 180; that stretch reads SDSDSRVTCL…ILFAINIDNK (145 aa). The interval 267–299 is disordered; the sequence is VSFDDDEEEQGTGDTLKKMPGTAESSEENSDRS. A phosphoserine mark is found at serine 268, serine 291, serine 292, serine 330, serine 344, serine 447, and serine 452. Disordered regions lie at residues 343–375 and 441–462; these read KSIDDDVDENEEDAYRSPLGRGHTGHAESPDRT and RYREASSPGQGSPLSSLLPSAS. Residues 445–462 are compositionally biased toward low complexity; it reads ASSPGQGSPLSSLLPSAS. Residues 467-547 adopt a coiled-coil conformation; it reads MTVHELRQAI…VLKVQLKKYV (81 aa). Residue serine 642 is modified to Phosphoserine. Threonine 644 is modified (phosphothreonine). Residues serine 645 and serine 649 each carry the phosphoserine modification. The PX domain occupies 659–782; it reads ALINVWIPSV…PFFVDITPPG (124 aa). The tract at residues 781-818 is disordered; that stretch reads PGEPLNKSSRPKAVSRFPKLSRGHPREVRNVEPQSGDL.

Belongs to the sorting nexin family.

In Mus musculus (Mouse), this protein is Sorting nexin-29 (Snx29).